The chain runs to 45 residues: Defensin Tk-AMP-D3 (45 aa).

4 cysteine pairs are disulfide-bonded: C3–C45, C14–C34, C20–C39, and C24–C41.

Plant defense peptide. The sequence is that of Defensin Tk-AMP-D3 from Triticum kiharae (Wheat).